The chain runs to 331 residues: Flagellar P-ring protein (331 aa).

An N-terminal signal peptide occupies residues 1-25; sequence MKKRLAVLLVIVLTITFSFSVTTRI.

This sequence belongs to the FlgI family. As to quaternary structure, the basal body constitutes a major portion of the flagellar organelle and consists of four rings (L,P,S, and M) mounted on a central rod.

Its subcellular location is the periplasm. The protein resides in the bacterial flagellum basal body. Its function is as follows. Assembles around the rod to form the L-ring and probably protects the motor/basal body from shearing forces during rotation. The protein is Flagellar P-ring protein of Thermotoga petrophila (strain ATCC BAA-488 / DSM 13995 / JCM 10881 / RKU-1).